Consider the following 295-residue polypeptide: 3-methyl-2-oxobutanoate hydroxymethyltransferase (295 aa).

Positions 53 and 92 each coordinate Mg(2+). 3-methyl-2-oxobutanoate contacts are provided by residues 53–54 (DS), D92, and K122. Mg(2+) is bound at residue E124. Catalysis depends on E191, which acts as the Proton acceptor.

Belongs to the PanB family. Homodecamer; pentamer of dimers. Mg(2+) serves as cofactor.

The protein resides in the cytoplasm. It carries out the reaction 3-methyl-2-oxobutanoate + (6R)-5,10-methylene-5,6,7,8-tetrahydrofolate + H2O = 2-dehydropantoate + (6S)-5,6,7,8-tetrahydrofolate. The protein operates within cofactor biosynthesis; (R)-pantothenate biosynthesis; (R)-pantoate from 3-methyl-2-oxobutanoate: step 1/2. In terms of biological role, catalyzes the reversible reaction in which hydroxymethyl group from 5,10-methylenetetrahydrofolate is transferred onto alpha-ketoisovalerate to form ketopantoate. The polypeptide is 3-methyl-2-oxobutanoate hydroxymethyltransferase (Koribacter versatilis (strain Ellin345)).